Here is a 453-residue protein sequence, read N- to C-terminus: Alpha-galacturonidase (453 aa).

11 to 72 (IKIAYIGGGS…SQWEYKSVDS (62 aa)) contacts NAD(+). Residue N151 participates in substrate binding. C173 is a Mn(2+) binding site. H174 functions as the Proton donor in the catalytic mechanism. Position 209 (H209) interacts with Mn(2+).

This sequence belongs to the glycosyl hydrolase 4 family. As to quaternary structure, homotetramer. Requires NAD(+) as cofactor. Mn(2+) is required as a cofactor.

The catalysed reaction is [(1-&gt;4)-alpha-D-galacturonosyl](n) + H2O = alpha-D-galacturonate + [(1-&gt;4)-alpha-D-galacturonosyl](n-1). Alpha-galacturonidase able to catalyze the hydrolysis of the chromogenic substrate p-nitrophenyl-alpha-D-galacturonic acid (pNPalphaGalUA). It is probable that alpha-1,4-di-galacturonate (GalUA(2)) is the naturally occurring substrate. In Thermoanaerobacter italicus (strain DSM 9252 / Ab9), this protein is Alpha-galacturonidase.